Reading from the N-terminus, the 356-residue chain is MTPSLTVLGIESSCDDTAAAVLRGPEVLSSVVYGQTALHAAFGGVVPELAARAHVEKLDIAVAAALSEAVLALDQIDVIAVTAGPGLIGGVLSGVMLAKGLSAASGVPLIGVNHLAGHALTPRFTDGLAFPYLMLLVSGGHCQFLRVEGPEAFHRLGGTIDDAPGEAFDKTAKLLGLPQPGGPAVEAEARAGDPARFVFPRPLLDRAGCDMSFSGLKTALLRARDGLVSAGGGLTAQDRADLCAGFQAAICDVLVEKSRRALTQSEGVTGFAVAGGVAANEQVRSGLARLAAELDAPFVAPPLRYCTDNAAMIAWAGQEAFSAGARSGLDLSARPRWPLDNSQPALLGSGKKGAKA.

2 residues coordinate Fe cation: His114 and His118. Residues 136–140 (LVSGG), Asp169, Gly182, and Asn280 each bind substrate. Asp308 lines the Fe cation pocket. Residues 333–356 (ARPRWPLDNSQPALLGSGKKGAKA) form a disordered region.

This sequence belongs to the KAE1 / TsaD family. Requires Fe(2+) as cofactor.

Its subcellular location is the cytoplasm. It catalyses the reaction L-threonylcarbamoyladenylate + adenosine(37) in tRNA = N(6)-L-threonylcarbamoyladenosine(37) in tRNA + AMP + H(+). Required for the formation of a threonylcarbamoyl group on adenosine at position 37 (t(6)A37) in tRNAs that read codons beginning with adenine. Is involved in the transfer of the threonylcarbamoyl moiety of threonylcarbamoyl-AMP (TC-AMP) to the N6 group of A37, together with TsaE and TsaB. TsaD likely plays a direct catalytic role in this reaction. The sequence is that of tRNA N6-adenosine threonylcarbamoyltransferase from Dinoroseobacter shibae (strain DSM 16493 / NCIMB 14021 / DFL 12).